The sequence spans 1002 residues: ToxR-activated gene A lipoprotein (1002 aa).

A signal peptide spans 1–21 (MVVRYSLLMKVSFAILIFLVG). C22 is lipidated: N-palmitoyl cysteine. C22 carries the S-diacylglycerol cysteine lipid modification. The segment at 31-53 (DQYLTDPDISEQTKKPSRPIIDE) is disordered. Residues 45–139 (KPSRPIIDEK…KIEFITLNEI (95 aa)) enclose the Fibronectin type-III domain. The Peptidase M66 domain occupies 282 to 536 (ELIIQNIDLG…QDWLKNGAVV (255 aa)). H432 contacts Zn(2+). E433 is an active-site residue. Zn(2+)-binding residues include H436 and H442.

The cofactor is Zn(2+).

It is found in the cell membrane. This is ToxR-activated gene A lipoprotein (tagA) from Vibrio cholerae serotype O1 (strain ATCC 39315 / El Tor Inaba N16961).